Here is a 407-residue protein sequence, read N- to C-terminus: D-3-phosphoglycerate dehydrogenase (407 aa).

NAD(+) is bound by residues 161–162 (HI), Asp-181, 238–240 (ASR), and Asp-264. Residue Arg-240 is part of the active site. The active site involves Glu-269. His-292 acts as the Proton donor in catalysis. 292 to 295 (HIGG) serves as a coordination point for NAD(+). An ACT domain is found at 340–407 (RILNIHNNKP…PNSIKTRVLY (68 aa)).

Belongs to the D-isomer specific 2-hydroxyacid dehydrogenase family.

The enzyme catalyses (2R)-3-phosphoglycerate + NAD(+) = 3-phosphooxypyruvate + NADH + H(+). It carries out the reaction (R)-2-hydroxyglutarate + NAD(+) = 2-oxoglutarate + NADH + H(+). The protein operates within amino-acid biosynthesis; L-serine biosynthesis; L-serine from 3-phospho-D-glycerate: step 1/3. Functionally, catalyzes the reversible oxidation of 3-phospho-D-glycerate to 3-phosphonooxypyruvate, the first step of the phosphorylated L-serine biosynthesis pathway. Also catalyzes the reversible oxidation of 2-hydroxyglutarate to 2-oxoglutarate. This is D-3-phosphoglycerate dehydrogenase (serA) from Dictyostelium discoideum (Social amoeba).